The chain runs to 215 residues: Cytidylate kinase (215 aa).

ATP is bound at residue 10-18; the sequence is GPAASGKGT.

It belongs to the cytidylate kinase family. Type 1 subfamily.

It is found in the cytoplasm. The catalysed reaction is CMP + ATP = CDP + ADP. The enzyme catalyses dCMP + ATP = dCDP + ADP. This is Cytidylate kinase from Bartonella quintana (strain Toulouse) (Rochalimaea quintana).